The following is a 119-amino-acid chain: Ribonuclease P protein component (119 aa).

Belongs to the RnpA family. As to quaternary structure, consists of a catalytic RNA component (M1 or rnpB) and a protein subunit.

It catalyses the reaction Endonucleolytic cleavage of RNA, removing 5'-extranucleotides from tRNA precursor.. In terms of biological role, RNaseP catalyzes the removal of the 5'-leader sequence from pre-tRNA to produce the mature 5'-terminus. It can also cleave other RNA substrates such as 4.5S RNA. The protein component plays an auxiliary but essential role in vivo by binding to the 5'-leader sequence and broadening the substrate specificity of the ribozyme. The polypeptide is Ribonuclease P protein component (Streptococcus mutans serotype c (strain ATCC 700610 / UA159)).